The primary structure comprises 557 residues: Leucine-rich glioma-inactivated protein 1 (557 aa).

A signal peptide spans 1-34 (MESESIRRMGNACIPLKRIAYFLCLFSVVLLTEG). Positions 35–72 (KKPAKPKCPAVCTCSKDNALCENARSIPRTVPPDVISL) constitute an LRRNT domain. 3 LRR repeats span residues 92–113 (SLQL…AFIG), 116–137 (HLEY…TFRG), and 140–161 (SLIH…IFKG). The LRRCT domain occupies 173–223 (NSFNCDCKLKWLVEWLGHTNATVEDIYCEGPPEYKKRKINSLSPKDFDCII). An N-linked (GlcNAc...) asparagine glycan is attached at Asn192. 7 EAR repeats span residues 225–267 (EFAK…EWDH), 271–313 (TFRN…KRDG), 317–364 (KFIK…KWNG), 366–415 (GFYS…QWSK), 419–462 (LFIN…KWGG), 464–506 (SFQD…NWDA), and 510–552 (KFVK…KHVI). Asn277 is a glycosylation site (N-linked (GlcNAc...) asparagine). Residue Asn422 is glycosylated (N-linked (GlcNAc...) asparagine).

Oligomer. Interacts with KCNA1 within a complex containing KCNA1, KCNA4 and KCNAB1. Can bind to ADAM11 and ADAM23. Part of a complex containing ADAM22, DLG4/PSD95 and CACNG2 (stargazin). Post-translationally, glycosylated. As to expression, expressed in brain. High levels found in hippocampus, thalamic nuclei, neocortex, and molecular and granule cell layers of the cerebellum.

The protein localises to the secreted. It is found in the synapse. Its subcellular location is the cytoplasm. Functionally, plays a role in suppressing the production of MMP1/3 through the phosphatidylinositol 3-kinase/ERK pathway. Regulates voltage-gated potassium channels assembled from KCNA1, KCNA4 and KCNAB1. It slows down channel inactivation by precluding channel closure mediated by the KCNAB1 subunit. Ligand for ADAM22 that positively regulates synaptic transmission mediated by AMPA-type glutamate receptors. This is Leucine-rich glioma-inactivated protein 1 (Lgi1) from Rattus norvegicus (Rat).